Consider the following 295-residue polypeptide: MDVDKLIEAGKIAKKVREEAVKLAKPGVSLLELAEKIEGRIIELGAKPAFPVNLSLNEIAAHYTPYKGDETTLKEGDYLKIDIGVHIDGYIADTAVTVRVGMEEDDLMEAAREALESAISVARAGVEIKELGRAIEDEIRKRGFNPIVNLSGHKIERYKLHAGISIPNIYRPHDNYKLREGDVFAIEPFATTGAGQVIEVPPTLIYMYVRDAPVRMVQARFLLAKIKREYKTLPFAYRWLQGEMPEGQLKLALRTLEKSGALYGYPVLREIRNGLVTQFEHTIIVEKDSVIVTTE.

His-62 serves as a coordination point for substrate. Positions 82, 93, and 153 each coordinate a divalent metal cation. His-161 lines the substrate pocket. 2 residues coordinate a divalent metal cation: Glu-187 and Glu-280.

Belongs to the peptidase M24A family. Methionine aminopeptidase archaeal type 2 subfamily. As to quaternary structure, monomer. It depends on Co(2+) as a cofactor. Requires Zn(2+) as cofactor. Mn(2+) is required as a cofactor. Fe(2+) serves as cofactor.

The catalysed reaction is Release of N-terminal amino acids, preferentially methionine, from peptides and arylamides.. Its function is as follows. Removes the N-terminal methionine from nascent proteins. The N-terminal methionine is often cleaved when the second residue in the primary sequence is small and uncharged (Met-Ala-, Cys, Gly, Pro, Ser, Thr, or Val). The protein is Methionine aminopeptidase of Pyrococcus abyssi (strain GE5 / Orsay).